A 469-amino-acid chain; its full sequence is Citrate synthase, mitochondrial (469 aa).

The N-terminal 33 residues, 1–33, are a transit peptide targeting the mitochondrion; that stretch reads MAPVMRLGSAALRSSIHLTSRQTAFTAARCYSS. Residue His352 is part of the active site.

Belongs to the citrate synthase family.

The protein localises to the mitochondrion matrix. The enzyme catalyses oxaloacetate + acetyl-CoA + H2O = citrate + CoA + H(+). It functions in the pathway carbohydrate metabolism; tricarboxylic acid cycle; isocitrate from oxaloacetate: step 1/2. The chain is Citrate synthase, mitochondrial (cit-1) from Neurospora crassa (strain ATCC 24698 / 74-OR23-1A / CBS 708.71 / DSM 1257 / FGSC 987).